Here is a 247-residue protein sequence, read N- to C-terminus: Granzyme B (247 aa).

A signal peptide spans 1-18 (MQPILLLLAFLLLPRADA). A propeptide spans 19–20 (GE) (activation peptide). A Peptidase S1 domain is found at 21 to 245 (IIGGHEAKPH…FVHWIKKTMK (225 aa)). Cysteine 49 and cysteine 65 are joined by a disulfide. The Charge relay system role is filled by histidine 64. 2 N-linked (GlcNAc...) asparagine glycosylation sites follow: asparagine 71 and asparagine 104. The Charge relay system role is filled by aspartate 108. Intrachain disulfides connect cysteine 142–cysteine 209 and cysteine 173–cysteine 188. The active-site Charge relay system is serine 203.

This sequence belongs to the peptidase S1 family. Granzyme subfamily.

Its subcellular location is the secreted. It localises to the cytolytic granule. It catalyses the reaction Preferential cleavage: -Asp-|-Xaa- &gt;&gt; -Asn-|-Xaa- &gt; -Met-|-Xaa-, -Ser-|-Xaa-.. With respect to regulation, inactivated by the serine protease inhibitor diisopropylfluorophosphate. Abundant protease in the cytosolic granules of cytotoxic T-cells and NK-cells which activates caspase-independent pyroptosis when delivered into the target cell through the immunological synapse. It cleaves after Asp. Once delivered into the target cell, acts by catalyzing cleavage of gasdermin-E (GSDME), releasing the pore-forming moiety of GSDME, thereby triggering pyroptosis and target cell death. Seems to be linked to an activation cascade of caspases (aspartate-specific cysteine proteases) responsible for apoptosis execution. Cleaves caspase-3, -9 and -10 (CASP3, CASP9 and CASP10, respectively) to give rise to active enzymes mediating apoptosis. Cleaves and activates CASP7 in response to bacterial infection, promoting plasma membrane repair. The polypeptide is Granzyme B (Homo sapiens (Human)).